The chain runs to 956 residues: MAM domain-containing glycosylphosphatidylinositol anchor protein 1 (956 aa).

The N-terminal stretch at 1–18 (MEVTCLLLLALIPFHCRG) is a signal peptide. 2 Ig-like domains span residues 24–123 (PAQA…KSIR) and 132–230 (PVLT…KSIT). Residue N42 is glycosylated (N-linked (GlcNAc...) asparagine). Cystine bridges form between C60-C108 and C157-C214. N-linked (GlcNAc...) asparagine glycosylation is found at N235, N257, and N307. Ig-like domains lie at 240 to 323 (PTLK…KTVN), 338 to 432 (PDMI…VEVN), 440 to 534 (PTIS…VQLT), and 539 to 632 (PEVE…FQVS). Intrachain disulfides connect C262/C308, C357/C415, C463/C514, and C560/C616. Residues 644–744 (TPNPTRSHKL…SRVIHYTEPI (101 aa)) form the Fibronectin type-III domain. The region spanning 752 to 919 (NTCHFEDEKI…VTLKKGECPR (168 aa)) is the MAM domain. Residues 780-789 (LTQNPKRSPN) are compositionally biased toward polar residues. The tract at residues 780–799 (LTQNPKRSPNTGPPTDISGT) is disordered. The GPI-anchor amidated serine moiety is linked to residue S933. Positions 934 to 956 (GAPRLSSLQLWGSMTIFLLALQR) are cleaved as a propeptide — removed in mature form.

Interacts heterophilically through its MAM domain with proteins in axon-rich regions and through its Ig-like domains with proteins in differentiating muscle. Interacts (through the Ig-like domains) with NLGN2. In terms of tissue distribution, high levels detected in developing central and peripheral nervous systems with little expression elsewhere. In brain, highest levels in cerebral cortex and hindbrain at E15. At postnatal day 1, highest levels in basilar pons and superficial layers of the neocortex. In the developing spinal cord, restricted to a subpopulation of neurons in the dorsal and spinal ventral cord, probably D1 interneurons. Expressed in brain.

The protein resides in the cell membrane. Functionally, required for radial migration of cortical neurons in the superficial layer of the neocortex. Plays a role in the formation or maintenance of inhibitory synapses. May function by inhibiting the activity of NLGN2. This is MAM domain-containing glycosylphosphatidylinositol anchor protein 1 (Mdga1) from Rattus norvegicus (Rat).